We begin with the raw amino-acid sequence, 296 residues long: Ribosomal RNA small subunit methyltransferase A (296 aa).

S-adenosyl-L-methionine-binding residues include asparagine 31, leucine 33, glycine 58, glutamate 79, aspartate 111, and asparagine 136.

The protein belongs to the class I-like SAM-binding methyltransferase superfamily. rRNA adenine N(6)-methyltransferase family. RsmA subfamily.

It is found in the cytoplasm. The enzyme catalyses adenosine(1518)/adenosine(1519) in 16S rRNA + 4 S-adenosyl-L-methionine = N(6)-dimethyladenosine(1518)/N(6)-dimethyladenosine(1519) in 16S rRNA + 4 S-adenosyl-L-homocysteine + 4 H(+). Specifically dimethylates two adjacent adenosines (A1518 and A1519) in the loop of a conserved hairpin near the 3'-end of 16S rRNA in the 30S particle. May play a critical role in biogenesis of 30S subunits. This is Ribosomal RNA small subunit methyltransferase A from Lactobacillus delbrueckii subsp. bulgaricus (strain ATCC BAA-365 / Lb-18).